An 862-amino-acid chain; its full sequence is Protein translocase subunit SecA (862 aa).

Residues glutamine 88, 106–110, and aspartate 506 each bind ATP; that span reads GEGKT. Zn(2+) contacts are provided by cysteine 839, cysteine 841, cysteine 850, and histidine 851.

It belongs to the SecA family. In terms of assembly, monomer and homodimer. Part of the essential Sec protein translocation apparatus which comprises SecA, SecYEG and auxiliary proteins SecDF-YajC and YidC. Zn(2+) is required as a cofactor.

It localises to the cell inner membrane. The protein resides in the cytoplasm. The catalysed reaction is ATP + H2O + cellular proteinSide 1 = ADP + phosphate + cellular proteinSide 2.. In terms of biological role, part of the Sec protein translocase complex. Interacts with the SecYEG preprotein conducting channel. Has a central role in coupling the hydrolysis of ATP to the transfer of proteins into and across the cell membrane, serving as an ATP-driven molecular motor driving the stepwise translocation of polypeptide chains across the membrane. The protein is Protein translocase subunit SecA of Campylobacter jejuni subsp. jejuni serotype O:2 (strain ATCC 700819 / NCTC 11168).